The chain runs to 350 residues: UDP-glucose 4-epimerase 2 (350 aa).

Residues 12–14 (GYI), 33–37 (DNYDN), 63–64 (DL), phenylalanine 85, and lysine 89 contribute to the NAD(+) site. Residue 129–131 (SAT) coordinates substrate. Tyrosine 153 acts as the Proton acceptor in catalysis. NAD(+) contacts are provided by lysine 157 and tyrosine 181. Substrate contacts are provided by residues 181–183 (YFN), 202–204 (NNL), 220–222 (TVF), arginine 235, and 297–300 (RPGD).

This sequence belongs to the NAD(P)-dependent epimerase/dehydratase family. In terms of assembly, forms homodimers and heterodimers. Requires NAD(+) as cofactor. Widely expressed. Most highly expressed in stems and flowers.

The protein localises to the cytoplasm. It catalyses the reaction UDP-alpha-D-glucose = UDP-alpha-D-galactose. The protein operates within carbohydrate metabolism; galactose metabolism. Its activity is regulated as follows. Enhanced activity by NaCl. Enhanced activity by NAD(+). Strongly inhibited by UDP. Catalyzes the interconversion between UDP-glucose and UDP-galactose. Cooperates with UGE3 in pollen development and with UGE4 in cell wall carbohydrate biosynthesis and growth. The sequence is that of UDP-glucose 4-epimerase 2 from Arabidopsis thaliana (Mouse-ear cress).